We begin with the raw amino-acid sequence, 453 residues long: Na(+)/H(+) antiporter NhaA 2 (453 aa).

11 helical membrane passes run Gly32–Ala52, Leu71–Leu91, Ala109–Ile129, Gly140–Gly160, Val169–Phe189, Asn193–Leu213, Ala232–Val252, Ala284–Val304, Pro310–Val330, Met356–Gly376, and His382–Leu402. The tract at residues Gly409–Pro453 is disordered.

Belongs to the NhaA Na(+)/H(+) (TC 2.A.33) antiporter family.

The protein resides in the cell membrane. It catalyses the reaction Na(+)(in) + 2 H(+)(out) = Na(+)(out) + 2 H(+)(in). Its function is as follows. Na(+)/H(+) antiporter that extrudes sodium in exchange for external protons. The chain is Na(+)/H(+) antiporter NhaA 2 from Salinispora tropica (strain ATCC BAA-916 / DSM 44818 / JCM 13857 / NBRC 105044 / CNB-440).